A 615-amino-acid chain; its full sequence is Zinc finger protein 653 (615 aa).

4 disordered regions span residues 1-48, 95-117, 176-236, and 401-432; these read MAER…ARRR, RSGRHGKPWEQVPKKPKRKKRRR, PLSD…SSGL, and EEKEEPVAPELATTVPESAEPEAEADGEELDG. Residues 107–118 carry the Nuclear localization signal motif; that stretch reads PKKPKRKKRRRR. Residues 108–117 show a composition bias toward basic residues; that stretch reads KKPKRKKRRR. Positions 193-205 are enriched in low complexity; sequence AGSSDSSSSGSAS. Residues 226 to 236 show a composition bias toward polar residues; that stretch reads TPTSPVGSSGL. Residues 419-432 are compositionally biased toward acidic residues; that stretch reads AEPEAEADGEELDG. The short motif at 445–451 is the Nuclear localization signal element; sequence EPEKRRR. 5 C2H2-type zinc fingers span residues 467–492, 498–522, 528–550, 556–578, and 586–609; these read FHCPYEGCSQVYVALSSFQNHVNLVH, KVCPHPGCGKKFYLSNHLRRHMIIH, FTCETCGKSFKRKNHLEVHRRTH, LQCEICGYQCRQRASLNWHMKKH, and FTCDRCGKRFEKLDSVKFHTLKSH.

This sequence belongs to the krueppel C2H2-type zinc-finger protein family. Interacts with NR5A1. As to expression, highly expressed in testis, cerebellum, temporal lobe, hippocampus and the adrenal gland. Moderately expressed in spleen, uterus, thymus, pancreas, kidney, stomach and rectum.

The protein resides in the nucleus. Functionally, transcriptional repressor. May repress NR5A1, PPARG, NR1H3, NR4A2, ESR1 and NR3C1 transcriptional activity. The chain is Zinc finger protein 653 (ZNF653) from Homo sapiens (Human).